The following is a 202-amino-acid chain: NADH-quinone oxidoreductase subunit C (202 aa).

This sequence belongs to the complex I 30 kDa subunit family. As to quaternary structure, NDH-1 is composed of 14 different subunits. Subunits NuoB, C, D, E, F, and G constitute the peripheral sector of the complex.

It is found in the cell inner membrane. It catalyses the reaction a quinone + NADH + 5 H(+)(in) = a quinol + NAD(+) + 4 H(+)(out). NDH-1 shuttles electrons from NADH, via FMN and iron-sulfur (Fe-S) centers, to quinones in the respiratory chain. The immediate electron acceptor for the enzyme in this species is believed to be ubiquinone. Couples the redox reaction to proton translocation (for every two electrons transferred, four hydrogen ions are translocated across the cytoplasmic membrane), and thus conserves the redox energy in a proton gradient. The sequence is that of NADH-quinone oxidoreductase subunit C from Paracidovorax citrulli (strain AAC00-1) (Acidovorax citrulli).